The chain runs to 237 residues: Undecaprenyl-diphosphatase (237 aa).

A run of 7 helical transmembrane segments spans residues 38–58, 65–85, 92–112, 126–146, 166–186, 191–211, and 217–237; these read QTAVLHLGTLVSVVLFAFDGI, WRIILNLIVSTIPAGVFGVLF, LFSSPRFLPLFFSVTALILMF, MSFLDALLVGIAQLFALFPGI, ALQYSFLMSIPVVLGAGILGL, VTILAPIFAFLSGLFALYVLS, and GKIWQFSYYCLFVAILSYLVG.

It belongs to the UppP family.

Its subcellular location is the cell inner membrane. It carries out the reaction di-trans,octa-cis-undecaprenyl diphosphate + H2O = di-trans,octa-cis-undecaprenyl phosphate + phosphate + H(+). Catalyzes the dephosphorylation of undecaprenyl diphosphate (UPP). Confers resistance to bacitracin. This chain is Undecaprenyl-diphosphatase, found in Thermotoga sp. (strain RQ2).